The following is a 387-amino-acid chain: MHRGRSASARQERDFRALMDLAHGFMASQVLFAGCALRVFDAAALGPVDAAALARSSGLSPRGTRLLLDACAGLGLLRRRRGAGPRGPAYTNSPLASTFLVAGSPLSQRSLLLYLAGTTYLCWGHLADGVREGRSQYARAVGVDADDPFTAIYRSEAERLLFMRGLQETWSLCGGRVLAAFDLSPFRVICDLGGGSGALARMAARLYPGSEVTVFETPDVVAAARAHFPPPADEDGAEPRVRFLSGDFFRSPLPPADLYVLARVLHDWADAACVELLRRVRGALRPGGAVLLVESVLSPGGAGPTRTLLLSLTMLLQARGRERTEAEYRALTARAGFSRLRLRRPRGPYHAMMAARGGGAGARSDGGGGEATSQTGSGTGREVGAQD.

Residues Y153, W170, E216, 246 to 248 (GDF), and R263 contribute to the S-adenosyl-L-methionine site. H266 (proton donor/acceptor) is an active-site residue. Substrate-binding residues include D267 and Q317. Residues 355 to 387 (ARGGGAGARSDGGGGEATSQTGSGTGREVGAQD) form a disordered region. Gly residues predominate over residues 356-370 (RGGGAGARSDGGGGE).

The protein belongs to the class I-like SAM-binding methyltransferase superfamily. Cation-independent O-methyltransferase family. As to quaternary structure, homodimer.

The enzyme catalyses N-acetylserotonin + S-adenosyl-L-methionine = melatonin + S-adenosyl-L-homocysteine + H(+). It participates in aromatic compound metabolism; melatonin biosynthesis; melatonin from serotonin: step 1/2. Functionally, catalyzes the transfer of a methyl group onto N-acetylserotonin, producing melatonin (N-acetyl-5-methoxytryptamine). The chain is Acetylserotonin O-methyltransferase (Asmt) from Mus musculus molossinus (Japanese house mouse).